Here is a 628-residue protein sequence, read N- to C-terminus: Vacuolar-sorting receptor 4 (628 aa).

Residues 1–24 (MKQLLCYLPWLLLLSLVVSPFNEA) form the signal peptide. Over 25–569 (RFVVEKNSLS…SKTGSQVKSA (545 aa)) the chain is Lumenal. One can recognise a PA domain in the interval 56 to 168 (QYGGSMAGTV…GFGEKLKKAI (113 aa)). 3 N-linked (GlcNAc...) asparagine glycosylation sites follow: Asn-148, Asn-294, and Asn-434. 2 EGF-like domains span residues 416 to 466 (ETNE…SHCE) and 469 to 516 (GPGR…KKCE). 7 cysteine pairs are disulfide-bonded: Cys-420–Cys-438, Cys-427–Cys-447, Cys-449–Cys-465, Cys-473–Cys-493, Cys-480–Cys-501, Cys-503–Cys-515, and Cys-545–Cys-558. The EGF-like 3; calcium-binding domain occupies 517–559 (DINECKEKKACQCPECSCKNTWGSYECSCSGDLLYMRDHDTCI). Residues 570 to 590 (WAAVWLIMLSLGLAAAGAYLV) traverse the membrane as a helical segment. Topologically, residues 591–628 (YKYRLRQYMDSEIRAIMAQYMPLDSQPEVPNHTNDERA) are cytoplasmic. Residues 610-613 (YMPL) carry the Tyrosine-based internalization motif motif.

It belongs to the VSR (BP-80) family. In terms of tissue distribution, expressed at low levels in seeds, seedlings, roots, stems, leaves, flowers and siliques.

It localises to the membrane. The protein localises to the golgi apparatus membrane. It is found in the cytoplasmic vesicle. The protein resides in the clathrin-coated vesicle membrane. Its subcellular location is the prevacuolar compartment membrane. Vacuolar-sorting receptor (VSR) involved in clathrin-coated vesicles sorting from Golgi apparatus to vacuoles. This Arabidopsis thaliana (Mouse-ear cress) protein is Vacuolar-sorting receptor 4 (VSR4).